A 436-amino-acid polypeptide reads, in one-letter code: Ribulose bisphosphate carboxylase large chain (436 aa).

An N6,N6,N6-trimethyllysine modification is found at lysine 4. Substrate contacts are provided by asparagine 113 and threonine 163. The active-site Proton acceptor is lysine 165. Position 167 (lysine 167) interacts with substrate. Mg(2+) contacts are provided by lysine 191, aspartate 193, and glutamate 194. Position 191 is an N6-carboxylysine (lysine 191). The Proton acceptor role is filled by histidine 284. Positions 285, 317, and 369 each coordinate substrate.

The protein belongs to the RuBisCO large chain family. Type I subfamily. Heterohexadecamer of 8 large chains and 8 small chains; disulfide-linked. The disulfide link is formed within the large subunit homodimers. It depends on Mg(2+) as a cofactor. Post-translationally, the disulfide bond which can form in the large chain dimeric partners within the hexadecamer appears to be associated with oxidative stress and protein turnover.

Its subcellular location is the plastid. The protein resides in the chloroplast. It catalyses the reaction 2 (2R)-3-phosphoglycerate + 2 H(+) = D-ribulose 1,5-bisphosphate + CO2 + H2O. It carries out the reaction D-ribulose 1,5-bisphosphate + O2 = 2-phosphoglycolate + (2R)-3-phosphoglycerate + 2 H(+). In terms of biological role, ruBisCO catalyzes two reactions: the carboxylation of D-ribulose 1,5-bisphosphate, the primary event in carbon dioxide fixation, as well as the oxidative fragmentation of the pentose substrate in the photorespiration process. Both reactions occur simultaneously and in competition at the same active site. This Sanguinaria canadensis (Bloodroot) protein is Ribulose bisphosphate carboxylase large chain.